The chain runs to 228 residues: Protein K8.1 (228 aa).

A signal peptide spans 1-26; it reads MSSTQIRTEIPVALLILCLCLVACHA. Residues asparagine 55, asparagine 60, asparagine 70, and asparagine 85 are each glycosylated (N-linked (GlcNAc...) asparagine; by host). A disordered region spans residues 77-113; the sequence is GSPSSEYPNVSVSVEDTSASGSGEDAIDESGSGEEER. Positions 78 to 97 are enriched in polar residues; sequence SPSSEYPNVSVSVEDTSASG. The chain crosses the membrane as a helical span at residues 197 to 217; that stretch reads LYILWAVGLLLGLVLILYLCV.

It localises to the host membrane. In Human herpesvirus 8 type P (isolate GK18) (HHV-8), this protein is Protein K8.1 (K8.1).